A 113-amino-acid chain; its full sequence is Nascent polypeptide-associated complex protein (113 aa).

The region spanning 5–73 (GMNPAKMKQM…AKEVPKSLEI (69 aa)) is the NAC-A/B domain.

The protein belongs to the NAC-alpha family. As to quaternary structure, homodimer. Interacts with the ribosome. Binds ribosomal RNA.

Functionally, contacts the emerging nascent chain on the ribosome. The sequence is that of Nascent polypeptide-associated complex protein from Methanosarcina acetivorans (strain ATCC 35395 / DSM 2834 / JCM 12185 / C2A).